Reading from the N-terminus, the 789-residue chain is Spermatogenesis-associated protein 20 (789 aa).

Positions 1–19 are enriched in basic residues; sequence MSHHSPPPPKHKGEHKGHG. Positions 1–65 are disordered; the sequence is MSHHSPPPPK…CPPPAPQKTA (65 aa). Phosphoserine occurs at positions 5 and 652.

As to expression, testis-specific and age-dependent (at protein level). Highly expressed. Expressed in round spermatids located in the inner half-layer of the seminiferous epithelium as well as in early elongated spermatids having cytoplasmic protrusions into the tubular lumen.

Its subcellular location is the secreted. In terms of biological role, may play a role in fertility regulation. This chain is Spermatogenesis-associated protein 20 (Spata20), found in Rattus norvegicus (Rat).